A 74-amino-acid polypeptide reads, in one-letter code: Pelophylaxin-3 (74 aa).

The N-terminal stretch at 1–22 is a signal peptide; that stretch reads MFTLKKSLLLVFFLGTISLSLC. The propeptide occupies 23–39; sequence EDERNADEDDGEMTEEV. A disulfide bond links C68 and C74.

In terms of tissue distribution, expressed by the skin glands.

It localises to the secreted. In terms of biological role, antimicrobial peptide. This is Pelophylaxin-3 from Pelophylax fukienensis (Fukien gold-striped pond frog).